Consider the following 349-residue polypeptide: Rhodopsin (349 aa).

The Extracellular portion of the chain corresponds to 1 to 33 (TEGPYFYIPMSNATGIVRSPYEYPQYYLVYPAA). N-linked (GlcNAc...) asparagine glycosylation occurs at N12. The chain crosses the membrane as a helical span at residues 34-58 (YAVLGAYMFFLIIFGFPVNFLTLYV). At 59–70 (TIEHKKLRTPLN) the chain is on the cytoplasmic side. The helical transmembrane segment at 71-93 (YILLNLAVADLFMVIGGFTTTIY) threads the bilayer. Topologically, residues 94 to 107 (TSMHGYFVLGRLGC) are extracellular. C107 and C184 are disulfide-bonded. A helical transmembrane segment spans residues 108–130 (NLEGFSATLGGMIGLWSLVVLAI). A 'Ionic lock' involved in activated form stabilization motif is present at residues 131–133 (ERW). The Cytoplasmic portion of the chain corresponds to 131-149 (ERWVVVCKPMSNFRFGENH). Residues 150-170 (AIMGVTLTWVMGLACTVPPLV) traverse the membrane as a helical segment. The Extracellular segment spans residues 171-199 (GWSRYIPEGMQCSCGIDYYTRAEGFNNDS). Residue N197 is glycosylated (N-linked (GlcNAc...) asparagine). Residues 200–221 (YVLYMFVCHFLIPLVVIFFCYG) traverse the membrane as a helical segment. The Cytoplasmic portion of the chain corresponds to 222 to 249 (RLLCAVKEAAAAQQESETTQRAEREVTR). Residues 250-271 (MVILMVIGFLVCWLPYASVAWY) form a helical membrane-spanning segment. Topologically, residues 272–283 (IFTHQGSEFGPL) are extracellular. A helical transmembrane segment spans residues 284–305 (FMTIPAFFAKSSSIYNPVIYIC). Residue K293 is modified to N6-(retinylidene)lysine. Residues 306-349 (MNKQFRQCMLTTLFCGKNPFEEEEGASSTKTEASSASSSSVSPA) are Cytoplasmic-facing. C320 carries the S-palmitoyl cysteine lipid modification. Residues 326–349 (EEEEGASSTKTEASSASSSSVSPA) form a disordered region. Residues 331–349 (ASSTKTEASSASSSSVSPA) are compositionally biased toward low complexity.

This sequence belongs to the G-protein coupled receptor 1 family. Opsin subfamily. Phosphorylated on some or all of the serine and threonine residues present in the C-terminal region. In terms of processing, contains one covalently linked retinal chromophore.

The protein localises to the membrane. The protein resides in the cell projection. It is found in the cilium. Its subcellular location is the photoreceptor outer segment. Functionally, photoreceptor required for image-forming vision at low light intensity. While most salt water fish species use retinal as chromophore, most freshwater fish use 3-dehydroretinal, or a mixture of retinal and 3-dehydroretinal. Light-induced isomerization of 11-cis to all-trans retinal triggers a conformational change that activates signaling via G-proteins. Subsequent receptor phosphorylation mediates displacement of the bound G-protein alpha subunit by arrestin and terminates signaling. The sequence is that of Rhodopsin (rho) from Myripristis violacea (Lattice soldierfish).